We begin with the raw amino-acid sequence, 166 residues long: Putative lipoprotein Lxx21020 (166 aa).

The first 22 residues, 1–22, serve as a signal peptide directing secretion; sequence MTKTTRLLRATTVAAILLGLTG. Residue Cys-23 is the site of N-palmitoyl cysteine attachment. Cys-23 carries S-diacylglycerol cysteine lipidation.

It is found in the cell membrane. The polypeptide is Putative lipoprotein Lxx21020 (Leifsonia xyli subsp. xyli (strain CTCB07)).